Reading from the N-terminus, the 216-residue chain is Small ribosomal subunit protein eS6 (216 aa).

It belongs to the eukaryotic ribosomal protein eS6 family.

This Staphylothermus marinus (strain ATCC 43588 / DSM 3639 / JCM 9404 / F1) protein is Small ribosomal subunit protein eS6.